Reading from the N-terminus, the 408-residue chain is Methyltransferase/ribosomally synthesized type I borosin cyclic peptide precursor sveMA (408 aa).

Residues 1–250 (MASSTHPKRG…TSSTFYIPPR (250 aa)) form a methyltransferase domain region. Active-site residues include Arg-73, Tyr-77, and Tyr-99. S-adenosyl-L-methionine is bound by residues Tyr-99, His-101, Ile-104, Ala-131, Gln-173, Gly-211, Ser-242, and Thr-244. A clasp domain region spans residues 251-375 (DSEAIDYDMV…GSVYKVMSAT (125 aa)). Residues 371-385 (VMSATQADIELGKEP) form a precursor leader region. An N-methylvaline modification is found at Val-401. Ile-402 carries the post-translational modification N-methylisoleucine. Val-406 is modified (N-methylvaline).

It in the N-terminal section; belongs to the precorrin methyltransferase family. Homodimer. SveMA automethylates at Val-401, Ile-402 and Val-406 before being processed by a prolyloligopeptidase which likely forms a peptidyl ester upon removal of the follower propeptide, which then undergoes macrocyclization with the N-terminus of the modified core peptide. Peptide backbone alpha-N-methylations change the physicochemical properties of amide bonds to provide structural constraints and other favorable characteristics including biological membrane permeability to peptides.

The protein operates within secondary metabolite biosynthesis. Its function is as follows. Fusion protein of the methyltransferase sveM and a type I borosin core peptide; part of the gene cluster that mediates the biosynthesis of a type I borosin, a highly methylated cyclic peptide with potent biological activities. Type I borosins derive from the C-terminus of the fusion protein, and it is the same protein that methylates its own C-terminus using S-adenosyl methionine (SAM). The C-terminus is subsequently cleaved off and macrocyclized by a prolyloligopeptidase to give the final product. The chain is Methyltransferase/ribosomally synthesized type I borosin cyclic peptide precursor sveMA from Serendipita vermifera subsp. bescii (Mycorrhizal fungus).